A 489-amino-acid chain; its full sequence is Glutamyl-tRNA(Gln) amidotransferase subunit A (489 aa).

Catalysis depends on charge relay system residues Lys-80 and Ser-160. The active-site Acyl-ester intermediate is the Ser-184.

It belongs to the amidase family. GatA subfamily. As to quaternary structure, heterotrimer of A, B and C subunits.

The catalysed reaction is L-glutamyl-tRNA(Gln) + L-glutamine + ATP + H2O = L-glutaminyl-tRNA(Gln) + L-glutamate + ADP + phosphate + H(+). Its function is as follows. Allows the formation of correctly charged Gln-tRNA(Gln) through the transamidation of misacylated Glu-tRNA(Gln) in organisms which lack glutaminyl-tRNA synthetase. The reaction takes place in the presence of glutamine and ATP through an activated gamma-phospho-Glu-tRNA(Gln). The protein is Glutamyl-tRNA(Gln) amidotransferase subunit A of Wolbachia sp. subsp. Drosophila simulans (strain wRi).